The following is a 175-amino-acid chain: Cytochrome c-550-like protein (175 aa).

Residues 1–34 (MYQPHFWQRSIGWLCGGLLILLLGWTIAPATALA) form the signal peptide. Residues cysteine 81, cysteine 84, histidine 85, and cysteine 135 each coordinate heme c.

The protein belongs to the cytochrome c family. PsbV subfamily. The cofactor is heme c.

The protein resides in the cellular thylakoid membrane. In terms of biological role, probable low-potential cytochrome c, can partially replace cytochrome c-550 (PsbV) function. This is Cytochrome c-550-like protein from Thermosynechococcus vestitus (strain NIES-2133 / IAM M-273 / BP-1).